Consider the following 221-residue polypeptide: Large ribosomal subunit protein uL3 (221 aa).

It belongs to the universal ribosomal protein uL3 family. Part of the 50S ribosomal subunit. Forms a cluster with proteins L14 and L19.

Its function is as follows. One of the primary rRNA binding proteins, it binds directly near the 3'-end of the 23S rRNA, where it nucleates assembly of the 50S subunit. The protein is Large ribosomal subunit protein uL3 of Nocardia farcinica (strain IFM 10152).